The following is a 51-amino-acid chain: Large ribosomal subunit protein eL39 (51 aa).

The protein belongs to the eukaryotic ribosomal protein eL39 family.

This Pyrococcus horikoshii (strain ATCC 700860 / DSM 12428 / JCM 9974 / NBRC 100139 / OT-3) protein is Large ribosomal subunit protein eL39 (rpl39e).